The sequence spans 345 residues: MQMDERKKKILRAIVQDYISTAEPVGSRTIARKFDLGISPATIRNEMSDMEELGLIEQPHTSAGRIPSDAGYRYYVDCLLEKSSIADDVKDVIEKETTKRIAEIQTVIAHSSKLLSELTHLTSIVIGPDKGKSAFNQMHFLPYEPGKAIMVVVKENGVVENQIVEIGENVTAEELQRIANVFNHKMRGHSMEEVKRDMLHEIYSELTRQRFLIDNALELLSAVLSNSPEESSKVYLGGTLNMLNQPEFRDVEKIRNLFQIFEEGAQIIKVLHPQKEGLAVTIGGENKLKELRDCSIITGTYWIDGEPLGTIGLIGPTRMDYGKAMAMVDYMTRTLTELLTVRRRN.

It belongs to the HrcA family.

Functionally, negative regulator of class I heat shock genes (grpE-dnaK-dnaJ and groELS operons). Prevents heat-shock induction of these operons. The chain is Heat-inducible transcription repressor HrcA from Desulfitobacterium hafniense (strain DSM 10664 / DCB-2).